The following is a 512-amino-acid chain: Glucagon-like peptide 2 receptor (512 aa).

Over 1-135 (MRRLWGPGTP…KQNVDHYHHT (135 aa)) the chain is Extracellular. Cystine bridges form between C43–C65, C56–C97, and C78–C119. N73 carries N-linked (GlcNAc...) asparagine glycosylation. Residues 136–160 (LLSTLQLMYTVGYSLSLISLFLALT) traverse the membrane as a helical segment. Over 161-172 (LFLFLRKLHCTR) the chain is Cytoplasmic. The chain crosses the membrane as a helical span at residues 173–197 (NYIHMNLFASFILRALVVLVKDMVF). Over 198–223 (YNSYSRRPDSESGWMSYLSEISASCR) the chain is Extracellular. The helical transmembrane segment at 224–247 (SVQVLLHYFVGTNHLWLLVEGLYL) threads the bilayer. Residues 248–261 (HALLEPTVLPERRL) lie on the Cytoplasmic side of the membrane. The chain crosses the membrane as a helical span at residues 262–283 (WPKYLVVGWAFPMLFVIPWIFV). Residues 284–301 (RASLENTGCWAVNENKKI) are Extracellular-facing. A helical transmembrane segment spans residues 302-324 (WWIIRGPILLCVTVNFFIFLKIL). Topologically, residues 325 to 348 (KLLISKFRAHQMCFRDYKYRLAKS) are cytoplasmic. A helical transmembrane segment spans residues 349–367 (TLLLILLMGVHEFLFTFFT). Topologically, residues 368-379 (DDQVQGFSRLIR) are extracellular. A helical transmembrane segment spans residues 380 to 400 (LFIQLTLSSFHGFLVALQYGF). Residues 401-512 (ASREVKAELR…MEEILEESEI (112 aa)) are Cytoplasmic-facing. The segment at 458–494 (SGVSSHLTAGNLRDHGAQPHRGRGAWPRASSLSESSE) is disordered.

The protein belongs to the G-protein coupled receptor 2 family.

It localises to the cell membrane. Its function is as follows. This is a receptor for glucagon-like peptide 2. The activity of this receptor is mediated by G proteins which activate adenylyl cyclase. The chain is Glucagon-like peptide 2 receptor (Glp2r) from Mus musculus (Mouse).